A 490-amino-acid chain; its full sequence is Bifunctional protein HldE (490 aa).

The tract at residues 1–330 is ribokinase; the sequence is MERKNVESLF…GSMGFQHSDS (330 aa). 205–208 is an ATP binding site; sequence NRKE. Aspartate 275 is an active-site residue. The tract at residues 356 to 490 is cytidylyltransferase; sequence FTNGCFDLLH…DKILRAYGEE (135 aa).

This sequence in the N-terminal section; belongs to the carbohydrate kinase PfkB family. The protein in the C-terminal section; belongs to the cytidylyltransferase family. In terms of assembly, homodimer.

It catalyses the reaction D-glycero-beta-D-manno-heptose 7-phosphate + ATP = D-glycero-beta-D-manno-heptose 1,7-bisphosphate + ADP + H(+). The enzyme catalyses D-glycero-beta-D-manno-heptose 1-phosphate + ATP + H(+) = ADP-D-glycero-beta-D-manno-heptose + diphosphate. It participates in nucleotide-sugar biosynthesis; ADP-L-glycero-beta-D-manno-heptose biosynthesis; ADP-L-glycero-beta-D-manno-heptose from D-glycero-beta-D-manno-heptose 7-phosphate: step 1/4. The protein operates within nucleotide-sugar biosynthesis; ADP-L-glycero-beta-D-manno-heptose biosynthesis; ADP-L-glycero-beta-D-manno-heptose from D-glycero-beta-D-manno-heptose 7-phosphate: step 3/4. Catalyzes the phosphorylation of D-glycero-D-manno-heptose 7-phosphate at the C-1 position to selectively form D-glycero-beta-D-manno-heptose-1,7-bisphosphate. Functionally, catalyzes the ADP transfer from ATP to D-glycero-beta-D-manno-heptose 1-phosphate, yielding ADP-D-glycero-beta-D-manno-heptose. The protein is Bifunctional protein HldE of Geobacter metallireducens (strain ATCC 53774 / DSM 7210 / GS-15).